Consider the following 175-residue polypeptide: Shikimate kinase (175 aa).

16–21 lines the ATP pocket; sequence GAGKST. Ser20 provides a ligand contact to Mg(2+). The substrate site is built by Asp38, Arg62, and Gly84. Arg122 contacts ATP. Arg141 contributes to the substrate binding site.

The protein belongs to the shikimate kinase family. As to quaternary structure, monomer. The cofactor is Mg(2+).

The protein resides in the cytoplasm. It carries out the reaction shikimate + ATP = 3-phosphoshikimate + ADP + H(+). The protein operates within metabolic intermediate biosynthesis; chorismate biosynthesis; chorismate from D-erythrose 4-phosphate and phosphoenolpyruvate: step 5/7. In terms of biological role, catalyzes the specific phosphorylation of the 3-hydroxyl group of shikimic acid using ATP as a cosubstrate. This is Shikimate kinase from Legionella pneumophila (strain Paris).